The sequence spans 644 residues: ATP-dependent zinc metalloprotease FtsH (644 aa).

Residues 1-4 (MAKN) are Cytoplasmic-facing. The helical transmembrane segment at 5–25 (LILWLVIAVVLMSVFQSFGPS) threads the bilayer. Residues 26–98 (ESNGRKVDYS…VGEPPEEPSL (73 aa)) are Periplasmic-facing. The chain crosses the membrane as a helical span at residues 99–119 (LASIFISWFPMLLLIGVWIFF). The Cytoplasmic portion of the chain corresponds to 120 to 644 (MRQMQGGGGK…NTMSEQLGDK (525 aa)). ATP is bound at residue 192–199 (GPPGTGKT). Residue H414 participates in Zn(2+) binding. Residue E415 is part of the active site. The Zn(2+) site is built by H418 and D492. Residues 598–644 (VRPPAGWEEPGASNNAGDNGSPKAPRPVDEPRTPNPGNTMSEQLGDK) are disordered. Residues 632 to 644 (NPGNTMSEQLGDK) are compositionally biased toward polar residues.

In the central section; belongs to the AAA ATPase family. The protein in the C-terminal section; belongs to the peptidase M41 family. As to quaternary structure, homohexamer. Requires Zn(2+) as cofactor.

It is found in the cell inner membrane. Acts as a processive, ATP-dependent zinc metallopeptidase for both cytoplasmic and membrane proteins. Plays a role in the quality control of integral membrane proteins. The sequence is that of ATP-dependent zinc metalloprotease FtsH from Escherichia coli O157:H7.